The sequence spans 78 residues: Large ribosomal subunit protein bL28 (78 aa).

This sequence belongs to the bacterial ribosomal protein bL28 family.

This Microcystis aeruginosa (strain NIES-843 / IAM M-2473) protein is Large ribosomal subunit protein bL28.